The sequence spans 91 residues: Small ribosomal subunit protein uS19 (91 aa).

The protein belongs to the universal ribosomal protein uS19 family.

Protein S19 forms a complex with S13 that binds strongly to the 16S ribosomal RNA. In Ectopseudomonas mendocina (strain ymp) (Pseudomonas mendocina), this protein is Small ribosomal subunit protein uS19.